Consider the following 353-residue polypeptide: MSEIFDVNAAIYPFPARPVPLDTNEKAFYREKIKTLLKQRDAVLVAHYYTDPEIQALAEETGGCVADSLEMARFGNNHPASTLLVAGVRFMGETAKILNPEKKVLMPTLNAECSLDLGCPVDEFTAFCDSHPDRTVVVYANTSAAVKAKADWVVTSSIAVELIEHLDSLGEKIIWAPDRHLGSYVQKKSGADVLCWQGACIVHDEFKTQALARMKALYPDAAVLVHPESPQAVVDMADAVGSTSQLIQAAKTLPQKTLIVATDRGIFYKMQQACPDKELFEAPTAGEGATCRSCAHCPWMAMNGLRAIAEGLEQGGGMHEIHVDEELRQQALIPLNRMLDFANQLKLQVKGNA.

Iminosuccinate-binding residues include His47 and Ser68. Cys113 contacts [4Fe-4S] cluster. Iminosuccinate-binding positions include 139–141 and Ser156; that span reads YAN. Cys200 lines the [4Fe-4S] cluster pocket. Residues 226–228 and Thr243 contribute to the iminosuccinate site; that span reads HPE. Cys297 lines the [4Fe-4S] cluster pocket.

The protein belongs to the quinolinate synthase family. Type 1 subfamily. [4Fe-4S] cluster serves as cofactor.

The protein localises to the cytoplasm. It carries out the reaction iminosuccinate + dihydroxyacetone phosphate = quinolinate + phosphate + 2 H2O + H(+). It functions in the pathway cofactor biosynthesis; NAD(+) biosynthesis; quinolinate from iminoaspartate: step 1/1. In terms of biological role, catalyzes the condensation of iminoaspartate with dihydroxyacetone phosphate to form quinolinate. The polypeptide is Quinolinate synthase (Yersinia pestis bv. Antiqua (strain Nepal516)).